The following is a 355-amino-acid chain: Diacylglycerol O-acyltransferase 2A (355 aa).

Helical transmembrane passes span 41-61 (LLWCSMMSICMFIFFFLCSIP) and 62-78 (VLLWFPIILYLTWILVW). Asparagine 142 carries N-linked (GlcNAc...) asparagine glycosylation.

The protein belongs to the diacylglycerol acyltransferase family.

It is found in the endoplasmic reticulum membrane. It carries out the reaction an acyl-CoA + a 1,2-diacyl-sn-glycerol = a triacyl-sn-glycerol + CoA. It participates in glycerolipid metabolism; triacylglycerol biosynthesis. In terms of biological role, catalyzes the terminal and only committed step in triacylglycerol synthesis by using diacylglycerol and fatty acyl CoA as substrates. Required for storage lipid synthesis. The sequence is that of Diacylglycerol O-acyltransferase 2A (DGAT2A) from Umbelopsis ramanniana (Oleaginous fungus).